The following is a 384-amino-acid chain: Oxoeicosanoid receptor 1 (384 aa).

The tract at residues 1-21 (MELHNLSSPSPSLSSSVLPPS) is disordered. Residues 1–58 (MELHNLSSPSPSLSSSVLPPSFSPSPSSAPSAFTTVGGSSGGPCHPTSSSLVSAFLAP) lie on the Extracellular side of the membrane. The N-linked (GlcNAc...) asparagine glycan is linked to Asn-5. Residues 7-21 (SSPSPSLSSSVLPPS) are compositionally biased toward low complexity. Residues 59–79 (ILALEFVLGLVGNSLALFIFC) form a helical membrane-spanning segment. At 80-87 (IHTRPWTS) the chain is on the cytoplasmic side. Residues 88 to 108 (NTVFLVSLVAADFLLISNLPL) traverse the membrane as a helical segment. At 109 to 129 (RVDYYLLHETWRFGAAACKVN) the chain is on the extracellular side. Cys-126 and Cys-198 are oxidised to a cystine. Residues 130-152 (LFMLSTNRTASVVFLTAIALNRY) form a helical membrane-spanning segment. The Cytoplasmic portion of the chain corresponds to 153-172 (LKVVQPHHVLSRASVGAAAR). The helical transmembrane segment at 173–193 (VAGGLWVGILLLNGHLLLSTF) threads the bilayer. Over 194-215 (SGPSCLSYRVGTKPSASLRWHQ) the chain is Extracellular. A helical transmembrane segment spans residues 216 to 236 (ALYLLEFFLPLALILFAIVSI). The Cytoplasmic portion of the chain corresponds to 237–256 (GLTIRNRGLGGQAGPQRAMR). A helical transmembrane segment spans residues 257–277 (VLAMVVAVYTICFLPSIIFGM). Residues 278–297 (ASMVAFWLSACRSLDLCTQL) lie on the Extracellular side of the membrane. A helical transmembrane segment spans residues 298–318 (FHGSLAFTYLNSVLDPVLYCF). The Cytoplasmic portion of the chain corresponds to 319-384 (SSPNFLHQSR…SLEKEGSSQG (66 aa)).

This sequence belongs to the G-protein coupled receptor 1 family. As to expression, expressed in various tissues except brain. Expression is more intense in liver, kidney, peripheral leukocyte, lung, and spleen than in other tissues. Highly expressed in eosinophils, neutrophils, and lung macrophages.

Its subcellular location is the membrane. Receptor for eicosanoids and polyunsaturated fatty acids such as 5-oxo-6E,8Z,11Z,14Z-eicosatetraenoic acid (5-OXO-ETE), 5(S)-hydroperoxy-6E,8Z,11Z,14Z-eicosatetraenoic acid (5(S)-HPETE) and arachidonic acid. Seems to be coupled to the G(i)/G(o), families of heteromeric G proteins. This chain is Oxoeicosanoid receptor 1 (OXER1), found in Homo sapiens (Human).